Consider the following 671-residue polypeptide: DNA ligase (671 aa).

NAD(+) is bound by residues 32-36 (DAEYD), 81-82 (SL), and Glu-113. Catalysis depends on Lys-115, which acts as the N6-AMP-lysine intermediate. NAD(+) is bound by residues Arg-136, Glu-173, Lys-290, and Lys-314. Residues Cys-408, Cys-411, Cys-426, and Cys-432 each contribute to the Zn(2+) site. Positions 593 to 671 (EIDSPFAGKT…EAEMLRLLGS (79 aa)) constitute a BRCT domain.

This sequence belongs to the NAD-dependent DNA ligase family. LigA subfamily. Mg(2+) is required as a cofactor. It depends on Mn(2+) as a cofactor.

It catalyses the reaction NAD(+) + (deoxyribonucleotide)n-3'-hydroxyl + 5'-phospho-(deoxyribonucleotide)m = (deoxyribonucleotide)n+m + AMP + beta-nicotinamide D-nucleotide.. In terms of biological role, DNA ligase that catalyzes the formation of phosphodiester linkages between 5'-phosphoryl and 3'-hydroxyl groups in double-stranded DNA using NAD as a coenzyme and as the energy source for the reaction. It is essential for DNA replication and repair of damaged DNA. This is DNA ligase from Shigella flexneri serotype 5b (strain 8401).